The chain runs to 244 residues: Phosphoadenosine 5'-phosphosulfate reductase (244 aa).

The active-site Nucleophile; cysteine thiosulfonate intermediate is the Cys-239.

It belongs to the PAPS reductase family. CysH subfamily.

Its subcellular location is the cytoplasm. It carries out the reaction [thioredoxin]-disulfide + sulfite + adenosine 3',5'-bisphosphate + 2 H(+) = [thioredoxin]-dithiol + 3'-phosphoadenylyl sulfate. Its pathway is sulfur metabolism; hydrogen sulfide biosynthesis; sulfite from sulfate: step 3/3. Its function is as follows. Catalyzes the formation of sulfite from phosphoadenosine 5'-phosphosulfate (PAPS) using thioredoxin as an electron donor. The sequence is that of Phosphoadenosine 5'-phosphosulfate reductase from Pectobacterium atrosepticum (strain SCRI 1043 / ATCC BAA-672) (Erwinia carotovora subsp. atroseptica).